Reading from the N-terminus, the 300-residue chain is 4-hydroxy-tetrahydrodipicolinate synthase (300 aa).

T45 contributes to the pyruvate binding site. Y140 serves as the catalytic Proton donor/acceptor. K169 functions as the Schiff-base intermediate with substrate in the catalytic mechanism. I210 is a binding site for pyruvate.

The protein belongs to the DapA family. In terms of assembly, homotetramer; dimer of dimers.

It is found in the cytoplasm. The enzyme catalyses L-aspartate 4-semialdehyde + pyruvate = (2S,4S)-4-hydroxy-2,3,4,5-tetrahydrodipicolinate + H2O + H(+). The protein operates within amino-acid biosynthesis; L-lysine biosynthesis via DAP pathway; (S)-tetrahydrodipicolinate from L-aspartate: step 3/4. Its function is as follows. Catalyzes the condensation of (S)-aspartate-beta-semialdehyde [(S)-ASA] and pyruvate to 4-hydroxy-tetrahydrodipicolinate (HTPA). The polypeptide is 4-hydroxy-tetrahydrodipicolinate synthase (Helicobacter pylori (strain J99 / ATCC 700824) (Campylobacter pylori J99)).